The following is a 296-amino-acid chain: Protoheme IX farnesyltransferase (296 aa).

Residues 1-9 (MMFKQYLQV) lie on the Cytoplasmic side of the membrane. A helical membrane pass occupies residues 10 to 28 (TKPGIIFGNLISVIGGFLL). The Periplasmic segment spans residues 29–37 (ASKGSIDYP). A helical transmembrane segment spans residues 38-56 (LFIYTLVGVSLVVASGCVF). Residues 57–78 (NNYIDRDIDRKMERTKNRVLVK) are Cytoplasmic-facing. Residues 79–97 (GLISPGVSLVYATLLGIAG) traverse the membrane as a helical segment. Residues 98–107 (FMLLWFGANP) lie on the Periplasmic side of the membrane. A helical membrane pass occupies residues 108 to 126 (LACWLGVMGFVVYVGVYSL). At 127-197 (YMKRHSVYGT…YQAANIPVLP (71 aa)) the chain is on the cytoplasmic side. Residues 198–216 (VVKGISVAKNHITLYIIAF) traverse the membrane as a helical segment. At 217–228 (AVATLMLTLGGY) the chain is on the periplasmic side. Residues 229-247 (AGYKYLVVAAAVSVWWLGM) form a helical membrane-spanning segment. Residues 248-268 (ALRGYKVEDDKVWARKLFGFS) lie on the Cytoplasmic side of the membrane. A helical transmembrane segment spans residues 269–287 (IIAITALSIMMSVDFMVPN). Topologically, residues 288-296 (SQNLLTYVW) are periplasmic.

The protein belongs to the UbiA prenyltransferase family. Protoheme IX farnesyltransferase subfamily.

It is found in the cell inner membrane. It catalyses the reaction heme b + (2E,6E)-farnesyl diphosphate + H2O = Fe(II)-heme o + diphosphate. Its pathway is porphyrin-containing compound metabolism; heme O biosynthesis; heme O from protoheme: step 1/1. Its function is as follows. Converts heme B (protoheme IX) to heme O by substitution of the vinyl group on carbon 2 of heme B porphyrin ring with a hydroxyethyl farnesyl side group. The polypeptide is Protoheme IX farnesyltransferase (Salmonella typhimurium (strain LT2 / SGSC1412 / ATCC 700720)).